A 144-amino-acid polypeptide reads, in one-letter code: Superoxide dismutase [Mn], mitochondrial (144 aa).

3 residues coordinate Mn(2+): His10, His58, and Asp143.

This sequence belongs to the iron/manganese superoxide dismutase family. As to quaternary structure, homotetramer. Mn(2+) serves as cofactor.

Its subcellular location is the mitochondrion matrix. The enzyme catalyses 2 superoxide + 2 H(+) = H2O2 + O2. In terms of biological role, destroys superoxide anion radicals which are normally produced within the cells and which are toxic to biological systems. In Branchiostoma floridae (Florida lancelet), this protein is Superoxide dismutase [Mn], mitochondrial.